Reading from the N-terminus, the 264-residue chain is tRNA pseudouridine synthase A (264 aa).

Asp51 (nucleophile) is an active-site residue. A substrate-binding site is contributed by Tyr109.

Belongs to the tRNA pseudouridine synthase TruA family. As to quaternary structure, homodimer.

It carries out the reaction uridine(38/39/40) in tRNA = pseudouridine(38/39/40) in tRNA. Functionally, formation of pseudouridine at positions 38, 39 and 40 in the anticodon stem and loop of transfer RNAs. The sequence is that of tRNA pseudouridine synthase A from Vibrio cholerae serotype O1 (strain ATCC 39541 / Classical Ogawa 395 / O395).